Reading from the N-terminus, the 35-residue chain is Jingzhaotoxin F6-27.63 (35 aa).

Disulfide bonds link Cys-2-Cys-17, Cys-9-Cys-22, and Cys-16-Cys-29.

The protein belongs to the neurotoxin 10 (Hwtx-1) family. 49 (Jztx-F6) subfamily. Expressed by the venom gland.

Its subcellular location is the secreted. Functionally, probable ion channel inhibitor. The polypeptide is Jingzhaotoxin F6-27.63 (Chilobrachys guangxiensis (Chinese earth tiger tarantula)).